A 224-amino-acid chain; its full sequence is Claudin-19 (224 aa).

Residues 1–7 lie on the Cytoplasmic side of the membrane; it reads MANSGLQ. Residues 8–28 traverse the membrane as a helical segment; sequence LLGYFLALGGWVGIIASTALP. At 29 to 81 the chain is on the extracellular side; it reads QWKQSSYAGDAIITAVGLYEGLWMSCASQSTGQVQCKLYDSLLALDGHIQSAR. The cysteines at positions 54 and 64 are disulfide-linked. The helical transmembrane segment at 82–102 threads the bilayer; sequence ALMVVAVLLGFVAMVLSVVGM. Residues 103–117 lie on the Cytoplasmic side of the membrane; it reads KCTRVGDSNPTAKSR. Residues 118–138 traverse the membrane as a helical segment; sequence VAISGGALFLLAGLCTLTAVS. The Extracellular portion of the chain corresponds to 139-160; that stretch reads WYATLVTQEFFNPSTPVNARYE. A helical transmembrane segment spans residues 161 to 181; sequence FGPALFVGWASAGLAMLGGSF. Over 182–224 the chain is Cytoplasmic; the sequence is LCCTCPEPERANSIPQPYRSGPSTAAREPVVKLPASVKGPLGV.

It belongs to the claudin family. Can form homo- and heteropolymeric tight junction strands. Interacts with other claudins including CLDN3, CLDN10, CLDN16 and CLDN18 with highest affinity for CLDN16. Interacts (via PDZ-binding motif TRV) with TJP1 (via PDZ domain). As to quaternary structure, (Microbial infection) Interacts (via both extracellular domains) with Clostridium perfringens enterotoxin CPE; the interaction disrupts claudin assembly in tight junctions. As to expression, expressed in the corticomedullary axis of the TAL, specifically in the cortex and the outer stripe of outer medulla (OSOM) zone (at protein level). Expressed in peripheral nervous system, in Schwan cells (at protein level).

The protein localises to the cell junction. It localises to the tight junction. The protein resides in the cell membrane. It carries out the reaction Mg(2+)(in) = Mg(2+)(out). The catalysed reaction is Ca(2+)(in) = Ca(2+)(out). The enzyme catalyses Na(+)(in) = Na(+)(out). It catalyses the reaction K(+)(in) = K(+)(out). It carries out the reaction Rb(+)(in) = Rb(+)(out). The catalysed reaction is Cs(+)(in) = Cs(+)(out). The enzyme catalyses Li(+)(in) = Li(+)(out). Forms paracellular channels: coassembles with CLDN16 into tight junction strands with cation-selective channels through the strands, conveying epithelial permeability in a process known as paracellular tight junction permeability. Involved in the maintenance of ion gradients along the nephron. In the thick ascending limb (TAL) of Henle's loop, facilitates sodium paracellular permeability from the interstitial compartment to the lumen, contributing to the lumen-positive transepithelial potential that drives paracellular magnesium and calcium reabsorption. Forms paracellular barriers on its own. In the peripheral nervous system, represents a major constituent of the tight junctions in Schwann cells and contributes to electrical sealing. During retinal neurogenesis, may regulate the barrier properties of tight junctions in retinal pigment epithelium, required for proper retinal tissue differentiation and vision. The sequence is that of Claudin-19 from Mus musculus (Mouse).